A 586-amino-acid chain; its full sequence is MPKPINVRVTTMDAELEFAIQPNTTGKQLFDQVVKTIGLREVWYFGLHYVDNKGFPTWLKLDKKVSAQEVRKENPLQFKFRAKFYPEDVAEELIQDITQKLFFLQVKEGILSDEIYCPPETAVLLGSYAVQAKFGDYNKEVHKSGYLSSERLIPQRVMDQHKLTRDQWEDRIQVWHAEHRGMLKDNAMLEYLKIAQDLEMYGINYFEIKNKKGTDLWLGVDALGLNIYEKDDKLTPKIGFPWSEIRNISFNDKKFVIKPIDKKAPDFVFYAPRLRINKRILQLCMGNHELYMRRRKPDTIEVQQMKAQAREEKHQKQLERQQLETEKKRRETVEREKEQMMREKEELMLRLQDYEEKTKKAERELSEQIQRALQLEEERKRAQEEAERLEADRMAALRAKEELERQAVDQIKSQEQLAAELAEYTAKIALLEEARRRKEDEVEEWQHRAKEAQDDLVKTKEELHLVMTAPPPPPPPVYEPVSYHVQESLQDEGAEPTGYSAELSSEGIRDDRNEEKRITEAEKNERVQRQLLTLSSELSQARDENKRTHNDIIHNENMRQGRDKYKTLRQIRQGNTKQRIDEFEAL.

One can recognise an FERM domain in the interval 2–296 (PKPINVRVTT…NHELYMRRRK (295 aa)). At lysine 60 the chain carries N6-acetyllysine. A [IL]-x-C-x-x-[DE] motif motif is present at residues 115 to 120 (IYCPPE). At tyrosine 146 the chain carries Phosphotyrosine; by PDGFR. Residues 244 to 586 (EIRNISFNDK…KQRIDEFEAL (343 aa)) form an interaction with SCYL3 region. Positions 302–462 (VQQMKAQARE…QDDLVKTKEE (161 aa)) form a coiled coil. A disordered region spans residues 306 to 341 (KAQAREEKHQKQLERQQLETEKKRRETVEREKEQMM). Residues 308–341 (QAREEKHQKQLERQQLETEKKRRETVEREKEQMM) show a composition bias toward basic and acidic residues. At tyrosine 354 the chain carries Phosphotyrosine; by PDGFR. At serine 366 the chain carries Phosphoserine. Phosphotyrosine is present on tyrosine 478. Residues 485–564 (VQESLQDEGA…NENMRQGRDK (80 aa)) form a disordered region. The segment covering 507-528 (GIRDDRNEEKRITEAEKNERVQ) has biased composition (basic and acidic residues). Polar residues predominate over residues 530–539 (QLLTLSSELS). Phosphoserine is present on serine 535. A compositionally biased stretch (basic and acidic residues) spans 540–564 (QARDENKRTHNDIIHNENMRQGRDK). Threonine 567 is subject to Phosphothreonine; by ROCK2 and PKC/PRKCI.

Monomer. Homodimer. Interacts with PALS1 and NHERF2. Found in a complex with EZR, PODXL and NHERF2. Interacts with MCC, PLEKHG6, PODXL, SCYL3/PACE1, NHERF1 and TMEM8B. Interacts (when phosphorylated) with FES/FPS. Interacts with dimeric S100P, the interaction may be activating through unmasking of F-actin binding sites. Identified in complexes that contain VIM, EZR, AHNAK, BFSP1, BFSP2, ANK2, PLEC, PRX and spectrin. Detected in a complex composed of at least EZR, AHNAK, PPL and PRX. Interacts with PDPN (via cytoplasmic domain); activates RHOA and promotes epithelial-mesenchymal transition. Interacts with SPN/CD43 cytoplasmic tail, CD44 and ICAM2. Interacts with SLC9A3; interaction targets SLC9A3 to the apical membrane. Interacts with SLC9A1; regulates interactions of SLC9A1 with cytoskeletal and promotes stress fiber formation. Interacts with CLIC5; may work together in a complex which also includes RDX and MYO6 to stabilize linkages between the plasma membrane and subjacent actin cytoskeleton at the base of stereocilia. In terms of processing, phosphorylated by tyrosine-protein kinases. Phosphorylation by ROCK2 suppresses the head-to-tail association of the N-terminal and C-terminal halves resulting in an opened conformation which is capable of actin and membrane-binding. S-nitrosylation is induced by interferon-gamma and oxidatively-modified low-densitity lipoprotein (LDL(ox)) possibly implicating the iNOS-S100A8/9 transnitrosylase complex. In terms of tissue distribution, expressed in cerebral cortex, basal ganglia, hippocampus, hypophysis, and optic nerve. Weakly expressed in brain stem and diencephalon. Stronger expression was detected in gray matter of frontal lobe compared to white matter (at protein level). Component of the microvilli of intestinal epithelial cells. Preferentially expressed in astrocytes of hippocampus, frontal cortex, thalamus, parahippocampal cortex, amygdala, insula, and corpus callosum. Not detected in neurons in most tissues studied.

Its subcellular location is the apical cell membrane. It is found in the cell projection. The protein localises to the microvillus membrane. It localises to the ruffle membrane. The protein resides in the cytoplasm. Its subcellular location is the cell cortex. It is found in the cytoskeleton. The protein localises to the microvillus. With respect to regulation, a head-to-tail association, of the N-terminal and C-terminal halves results in a closed conformation (inactive form) which is incapable of actin or membrane-binding. Functionally, probably involved in connections of major cytoskeletal structures to the plasma membrane. In epithelial cells, required for the formation of microvilli and membrane ruffles on the apical pole. Along with PLEKHG6, required for normal macropinocytosis. The polypeptide is Ezrin (EZR) (Homo sapiens (Human)).